Consider the following 709-residue polypeptide: Heme/hemopexin utilization protein C (709 aa).

The signal sequence occupies residues 1–21; that stretch reads MRFSKLSLAITTTLVTANALA. The TBDR plug domain maps to 36-147; the sequence is DPSRFTYTPQ…LGGVVAMRTP (112 aa). The region spanning 158-709 is the TBDR beta-barrel domain; sequence KFGVKIRQGY…NAKISAVYSF (552 aa). Positions 692–709 match the TonB C-terminal box motif; that stretch reads SLMEGTGRNAKISAVYSF.

Belongs to the TonB-dependent receptor family.

It localises to the cell outer membrane. Required for utilization of free heme at low concentrations. The polypeptide is Heme/hemopexin utilization protein C (hxuC) (Haemophilus influenzae (strain 86-028NP)).